The chain runs to 357 residues: Protein pelota homolog (357 aa).

The protein belongs to the eukaryotic release factor 1 family. Pelota subfamily. In terms of assembly, monomer. The cofactor is a divalent metal cation.

It localises to the cytoplasm. Its function is as follows. May function in recognizing stalled ribosomes, interact with stem-loop structures in stalled mRNA molecules, and effect endonucleolytic cleavage of the mRNA. May play a role in the release non-functional ribosomes and degradation of damaged mRNAs. Has endoribonuclease activity. The sequence is that of Protein pelota homolog from Thermococcus kodakarensis (strain ATCC BAA-918 / JCM 12380 / KOD1) (Pyrococcus kodakaraensis (strain KOD1)).